A 595-amino-acid chain; its full sequence is Leiomodin-1 (595 aa).

3 disordered regions span residues 1–69 (MSKV…EAML), 81–322 (QREM…KVKN), and 467–568 (DKQR…QEKN). Ser-12 is subject to Phosphoserine. The span at 27-40 (EEMEELEKELDVVD) shows a compositional bias: acidic residues. Composition is skewed to basic and acidic residues over residues 81–110 (QREMSVDESKQVGRKTDAKNGEEKDSDASR), 117–127 (QDSDLGKEPKK), 134–192 (FSRD…EKTG), 200–223 (SRDKDKKKEEVKEPSKKEEVKLTA), 230–249 (GRREDGRLKESSKENKKPED), 257–287 (RDWRKEDEKVKKEENQPDKEVREESKTKAPE), 467–476 (DKQRQKRLQE), and 484–493 (SGEKKDRLEV). The residue at position 85 (Ser-85) is a Phosphoserine. A Phosphoserine modification is found at Ser-135. A run of 8 repeats spans residues 165-179 (AAVDRKESGKDGREE), 180-195 (RAAAARKEEEKTGSVK), 196-211 (NAGLSRDKDKKKEEVK), 212-226 (EPSKKEEVKLTAESR), 227-240 (NTVGRREDGRLKES), 242-255 (KENKKPEDEGIGSG), 256-271 (GRDWRKEDEKVKKEEN), and 272-288 (QPDKEVREESKTKAPEK). An 8 X approximate tandem repeats region spans residues 165–288 (AAVDRKESGK…EESKTKAPEK (124 aa)). The interval 503-522 (SPKPSPQPSPKPAPKNSPKK) is 5 X 4 AA approximate tandem repeats. Composition is skewed to pro residues over residues 505 to 517 (KPSPQPSPKPAPK) and 527 to 538 (AAPPPPPPPLAP). Ser-550 bears the Phosphoserine mark. Residues 569-588 (SRDQLLAAIRSSNLKQLKKV) enclose the WH2 domain.

The protein belongs to the tropomodulin family. In terms of tissue distribution, detected in aorta, urinary bladder and uterus (at protein level). Detected in smooth muscle cells. Detected in aorta, bladder, colon, intestine, stomach and uterus.

Its subcellular location is the cytoplasm. The protein resides in the myofibril. The protein localises to the sarcomere. It localises to the cytoskeleton. In terms of biological role, required for proper contractility of visceral smooth muscle cells. Mediates nucleation of actin filaments. This Mus musculus (Mouse) protein is Leiomodin-1 (Lmod1).